The chain runs to 231 residues: uncharacterized protein (231 aa).

Residues 86 to 106 (LIILFVIGLIITIIGLLMYEP) traverse the membrane as a helical segment.

It localises to the membrane. This is an uncharacterized protein from Methanocaldococcus jannaschii (strain ATCC 43067 / DSM 2661 / JAL-1 / JCM 10045 / NBRC 100440) (Methanococcus jannaschii).